A 492-amino-acid chain; its full sequence is Cobyric acid synthase (492 aa).

Residues 252–440 enclose the GATase cobBQ-type domain; that stretch reads RPKIAVLAYP…VHGLFADDHL (189 aa). Cys-334 serves as the catalytic Nucleophile. His-432 is an active-site residue.

This sequence belongs to the CobB/CobQ family. CobQ subfamily.

Its pathway is cofactor biosynthesis; adenosylcobalamin biosynthesis. Catalyzes amidations at positions B, D, E, and G on adenosylcobyrinic A,C-diamide. NH(2) groups are provided by glutamine, and one molecule of ATP is hydrogenolyzed for each amidation. In Bradyrhizobium sp. (strain BTAi1 / ATCC BAA-1182), this protein is Cobyric acid synthase.